The following is a 280-amino-acid chain: Ribosomal RNA small subunit methyltransferase A (280 aa).

S-adenosyl-L-methionine contacts are provided by Asn28, Leu30, Gly55, Glu77, Asp103, and Asn122.

It belongs to the class I-like SAM-binding methyltransferase superfamily. rRNA adenine N(6)-methyltransferase family. RsmA subfamily.

It is found in the cytoplasm. The catalysed reaction is adenosine(1518)/adenosine(1519) in 16S rRNA + 4 S-adenosyl-L-methionine = N(6)-dimethyladenosine(1518)/N(6)-dimethyladenosine(1519) in 16S rRNA + 4 S-adenosyl-L-homocysteine + 4 H(+). Functionally, specifically dimethylates two adjacent adenosines (A1518 and A1519) in the loop of a conserved hairpin near the 3'-end of 16S rRNA in the 30S particle. May play a critical role in biogenesis of 30S subunits. The sequence is that of Ribosomal RNA small subunit methyltransferase A from Ruegeria sp. (strain TM1040) (Silicibacter sp.).